Reading from the N-terminus, the 365-residue chain is Fructose-1,6-bisphosphatase class 1 2 (365 aa).

The Mg(2+) site is built by Glu100, Asp122, Leu124, and Asp125. Substrate-binding positions include 125-128 and Asn221; that span reads DGSS. A Mg(2+)-binding site is contributed by Glu293.

This sequence belongs to the FBPase class 1 family. Homotetramer. It depends on Mg(2+) as a cofactor.

It is found in the cytoplasm. It carries out the reaction beta-D-fructose 1,6-bisphosphate + H2O = beta-D-fructose 6-phosphate + phosphate. Its pathway is carbohydrate biosynthesis; gluconeogenesis. In Leptothrix cholodnii (strain ATCC 51168 / LMG 8142 / SP-6) (Leptothrix discophora (strain SP-6)), this protein is Fructose-1,6-bisphosphatase class 1 2.